The primary structure comprises 139 residues: Large ribosomal subunit protein uL22 (139 aa).

Residues 118–139 (VEVESRPKKVASKSKSQKGSAR) are disordered. Positions 125-139 (KKVASKSKSQKGSAR) are enriched in basic residues.

Belongs to the universal ribosomal protein uL22 family. In terms of assembly, part of the 50S ribosomal subunit.

In terms of biological role, this protein binds specifically to 23S rRNA; its binding is stimulated by other ribosomal proteins, e.g. L4, L17, and L20. It is important during the early stages of 50S assembly. It makes multiple contacts with different domains of the 23S rRNA in the assembled 50S subunit and ribosome. Functionally, the globular domain of the protein is located near the polypeptide exit tunnel on the outside of the subunit, while an extended beta-hairpin is found that lines the wall of the exit tunnel in the center of the 70S ribosome. This Saccharopolyspora erythraea (strain ATCC 11635 / DSM 40517 / JCM 4748 / NBRC 13426 / NCIMB 8594 / NRRL 2338) protein is Large ribosomal subunit protein uL22.